The primary structure comprises 261 residues: Small ribosomal subunit protein uS2 (261 aa).

The disordered stretch occupies residues 224 to 261 (GRQGEDDEAVQQEEVAEGVSKDSLEDLKKTVEEGSNEE). The segment covering 228–239 (EDDEAVQQEEVA) has biased composition (acidic residues). Residues 242 to 255 (VSKDSLEDLKKTVE) are compositionally biased toward basic and acidic residues.

This sequence belongs to the universal ribosomal protein uS2 family.

In Pediococcus acidilactici, this protein is Small ribosomal subunit protein uS2 (rpsB).